The primary structure comprises 292 residues: MYGLRTLFSLGLLVGGARLGARVAQVGALGGTCPLGQGLVADGNSQCKQFRTGAAMERGLRYLSQEEAQAVDEELFNEYRFSVDQLMELAGLSCAVAITKAYPVSSFTSNLPTVLVVCGPGNNGGDGLVCARHLKLFKGYEPAIHYPKRPNKTLFENLTTQCQKMDIPFVSEFPSEPEVIDGAYNLVVDAVFGFSFKGAVREPFGNILSTLKRVTVPIASVDIPSGWDVEKGNPEGIQPDMLISLTAPKQSAVHFTGRYHFLGGRFVPKALEKKYSLNLPPYPGTECVQKLP.

A mitochondrion-targeting transit peptide spans 1–52; the sequence is MYGLRTLFSLGLLVGGARLGARVAQVGALGGTCPLGQGLVADGNSQCKQFRT. Residues 68 to 279 enclose the YjeF N-terminal domain; sequence AQAVDEELFN…ALEKKYSLNL (212 aa). A (6S)-NADPHX-binding site is contributed by 122–126; the sequence is NNGGD. N123 and D189 together coordinate K(+). Residues 193 to 199 and D222 contribute to the (6S)-NADPHX site; that span reads GFSFKGA. Position 225 (S225) interacts with K(+).

This sequence belongs to the NnrE/AIBP family. K(+) is required as a cofactor.

Its subcellular location is the mitochondrion. It localises to the secreted. The enzyme catalyses (6R)-NADHX = (6S)-NADHX. It carries out the reaction (6R)-NADPHX = (6S)-NADPHX. Its function is as follows. Catalyzes the epimerization of the S- and R-forms of NAD(P)HX, a damaged form of NAD(P)H that is a result of enzymatic or heat-dependent hydration. This is a prerequisite for the S-specific NAD(P)H-hydrate dehydratase to allow the repair of both epimers of NAD(P)HX. This is NAD(P)H-hydrate epimerase from Xenopus tropicalis (Western clawed frog).